Reading from the N-terminus, the 118-residue chain is Putative ankyrin repeat protein R747 (118 aa).

An ANK repeat occupies 70-99 (NCYYLLDYAIMKNDIPVIVTLIEKGANINR).

The polypeptide is Putative ankyrin repeat protein R747 (Acanthamoeba polyphaga (Amoeba)).